The chain runs to 394 residues: MSKEKFERLKPHVNVGTIGHVDHGKTTLTAAICTVLAKVYGGDAKDFASIDNAPEERERGITISTSHVEYDTPARHYAHVDCPGHADYVKNMITGAAQMDGGILVVAATDGPMPQTREHILLGRQVGIPYIIVFMNKCDMVDDEELLELVEMEVRELLSEYDFPGDDCPVIMGSALGALNGEAQWEEKIIELAEALDNYIPEPERAIDLPFILPIEDVFSIQGRGTVVTGRVEQGIVRVGEEVAIIGIKETTTTTCTGVEMFRKLLDEGRAGENVGVLLRGTKRDDVERGQVLAKPGSITPHTTFTSEIYVLSKDEGGRHTPFFKGYRPQFYFRTTDVTGTIELPEGVEMVMPGDNIAMTVTLIAPIAMDEGLRFAIREGGRTVGAGVVATIIA.

Positions 10 to 204 constitute a tr-type G domain; the sequence is KPHVNVGTIG…ALDNYIPEPE (195 aa). A G1 region spans residues 19-26; it reads GHVDHGKT. 19–26 serves as a coordination point for GTP; the sequence is GHVDHGKT. Residue T26 coordinates Mg(2+). The segment at 60–64 is G2; sequence GITIS. The interval 81–84 is G3; the sequence is DCPG. GTP is bound by residues 81–85 and 136–139; these read DCPGH and NKCD. The tract at residues 136-139 is G4; the sequence is NKCD. Positions 174–176 are G5; sequence SAL.

It belongs to the TRAFAC class translation factor GTPase superfamily. Classic translation factor GTPase family. EF-Tu/EF-1A subfamily. In terms of assembly, monomer.

It is found in the cytoplasm. It catalyses the reaction GTP + H2O = GDP + phosphate + H(+). GTP hydrolase that promotes the GTP-dependent binding of aminoacyl-tRNA to the A-site of ribosomes during protein biosynthesis. The chain is Elongation factor Tu 1 from Photobacterium profundum (strain SS9).